Consider the following 548-residue polypeptide: Cytochrome P450 monooxygenase lcsK (548 aa).

The next 2 helical transmembrane spans lie at 28 to 48 (HAYPWRYVALLLAGSLSLWAF) and 68 to 88 (VLLFLYLGGLAGSVLLYRLFF). Residues asparagine 172, asparagine 223, asparagine 242, and asparagine 404 are each glycosylated (N-linked (GlcNAc...) asparagine). Cysteine 487 provides a ligand contact to heme.

It belongs to the cytochrome P450 family. The cofactor is heme.

Its subcellular location is the membrane. It functions in the pathway secondary metabolite biosynthesis. Functionally, cytochrome P450 monooxygenase; part of the gene cluster that mediates the biosynthesis of the lipopeptide antibiotics leucinostatins that show extensive biological activities, including antimalarial, antiviral, antibacterial, antifungal, and antitumor activities, as well as phytotoxic. Leucinostatin A contains nine amino acid residues, including the unusual amino acid 4-methyl-L-proline (MePro), 2-amino-6-hydroxy-4-methyl-8-oxodecanoic acid (AHyMeOA), 3-hydroxyleucine (HyLeu), alpha-aminoisobutyric acid (AIB), beta-Ala, a 4-methylhex-2-enoic acid at the N-terminus as well as a N1,N1-dimethylpropane-1,2-diamine (DPD) at the C-terminus. The biosynthesis of leucinostatins is probably initiated with the assembly of 4-methylhex-2-enoic acid by a reducing PKS. Two reducing polyketide synthases, lcsB and lcsC, have been identified in the cluster and it is not clear which is the one that assembles 4-methylhex-2-enoic acid since both contain KS, AT, DH, cMT, ER, KR and ACP domains. The polyketide residue might be transferred to the NRPS lcsA, mediated by two additional enzymes, the acyl-CoA ligase lcsD and the thioesterase lcsE. The linear polyketide carboxylic acid, which is released from PKS, is converted to a CoA thioester by lcsD, and then lcsE hydrolyzes the thiol bond and shuttles the polyketide intermediate to lcsA. The C domain of the first module catalyzed the condensation of 4-methylhex-2-enoic acid and MePro carried by domain A1, followed by successive condensations of nine amino acids to trigger the elongation of the linear peptide. A5 and A6 domains of lcsA are proposed to incorporate leucine, A2 AHyMeOA, and A3 incorporates HyLeu. A4, A7 and A8 incorporate AIB. The AHyMeOA in leucinostatin A activated by the A2 might be produced by the second PKS (lcsB or lcsC) present within the cluster. The MePro is probably produced via leucine cyclization and may originate from a separate pathway, independent of the cluster. Another nonproteinogenic amino acid, beta-Ala, could be produced by an aspartic acid decarboxylase also localized outside of the cluster. Two candidates are VFPBJ_01400 and VFPBJ_10476. The final peptide scaffold may be released by the NAD(P)H-dependent thioester reductase (TE) at the C-terminal region of lcsA. Transamination of the lcsA product by the transaminase lcsP may produce DPD at the C-terminus. Further hydroxylation steps performed alternatively by the cytochrome P450 monooxygenases lcsI, lcsK and lcsN then yield the non-methylated leucinostatins precursor. It is also possible that leucines can be hydroxylated prior to their incorporation into the peptide. Varying extents of methylation then lead to the formation of leucinostatins A and B. In Purpureocillium lilacinum (Paecilomyces lilacinus), this protein is Cytochrome P450 monooxygenase lcsK.